Here is a 1892-residue protein sequence, read N- to C-terminus: Protein TIC 214 (1892 aa).

The next 6 membrane-spanning stretches (helical) occupy residues 12–32 (LISL…YYGF), 68–88 (FIAG…HLAL), 89–109 (GKPH…FFWN), 128–148 (LSIQ…HFIL), 176–196 (VGWL…LVWI), and 225–245 (IFSI…PSPI). Residues 256–266 (PEEVGESEEER) show a composition bias toward acidic residues. Residues 256–299 (PEEVGESEEERNIEIETISEGGGANQKQGTEENTSSSLFSEEEV) are disordered. A compositionally biased stretch (polar residues) spans 280–294 (NQKQGTEENTSSSLF). A helical membrane pass occupies residues 1115–1135 (FYFFINFFIEKIYMDILLYII). The interval 1613–1636 (SNQEKDVEEDYDKSDKKKRRKKKQ) is disordered.

This sequence belongs to the TIC214 family. In terms of assembly, part of the Tic complex.

Its subcellular location is the plastid. The protein localises to the chloroplast inner membrane. Functionally, involved in protein precursor import into chloroplasts. May be part of an intermediate translocation complex acting as a protein-conducting channel at the inner envelope. The polypeptide is Protein TIC 214 (Gossypium hirsutum (Upland cotton)).